Reading from the N-terminus, the 370-residue chain is 2-aminoethylphosphonate--pyruvate transaminase (370 aa).

N6-(pyridoxal phosphate)lysine is present on lysine 194.

This sequence belongs to the class-V pyridoxal-phosphate-dependent aminotransferase family. PhnW subfamily. Homodimer. Pyridoxal 5'-phosphate serves as cofactor.

The enzyme catalyses (2-aminoethyl)phosphonate + pyruvate = phosphonoacetaldehyde + L-alanine. Functionally, involved in phosphonate degradation. The chain is 2-aminoethylphosphonate--pyruvate transaminase from Paraburkholderia phymatum (strain DSM 17167 / CIP 108236 / LMG 21445 / STM815) (Burkholderia phymatum).